The sequence spans 387 residues: Alpha-sarcoglycan (387 aa).

An N-terminal signal peptide occupies residues 1 to 23; the sequence is MAETLFWTPLLVVLLAGLGDTEA. The Extracellular segment spans residues 24-290; the sequence is QQTTLHPLVG…APDRDFLVDA (267 aa). N-linked (GlcNAc...) asparagine glycans are attached at residues N174 and N246. Residues 291–311 traverse the membrane as a helical segment; the sequence is LVTLLVPLLVALLLTLLLAYV. Topologically, residues 312 to 387 are cytoplasmic; sequence MCCRREGRLK…AQVPLILDQH (76 aa). S377 carries the phosphoserine modification.

It belongs to the sarcoglycan alpha/epsilon family. In terms of assembly, interacts with the syntrophin SNTA1. Cross-link to form 2 major subcomplexes: one consisting of SGCB, SGCD and SGCG and the other consisting of SGCB and SGCD. The association between SGCB and SGCG is particularly strong while SGCA is loosely associated with the other sarcoglycans. In terms of tissue distribution, most strongly expressed in skeletal muscle. Also expressed in cardiac muscle and, at much lower levels, in lung. In the fetus, most abundant in cardiac muscle and, at lower levels, in lung. Also detected in liver and kidney. Not expressed in brain.

The protein localises to the cell membrane. It is found in the sarcolemma. The protein resides in the cytoplasm. Its subcellular location is the cytoskeleton. Functionally, component of the sarcoglycan complex, a subcomplex of the dystrophin-glycoprotein complex which forms a link between the F-actin cytoskeleton and the extracellular matrix. In Homo sapiens (Human), this protein is Alpha-sarcoglycan (SGCA).